A 185-amino-acid polypeptide reads, in one-letter code: NADH-ubiquinone oxidoreductase chain 6 (185 aa).

A run of 5 helical transmembrane segments spans residues 3 to 23 (SLFM…ISTP), 28 to 48 (SVFW…SLGL), 54 to 74 (IFII…IMLI), 87 to 107 (HFLP…TNSP), and 134 to 154 (ELVL…ILLA).

This sequence belongs to the complex I subunit 6 family.

The protein localises to the mitochondrion membrane. The catalysed reaction is a ubiquinone + NADH + 5 H(+)(in) = a ubiquinol + NAD(+) + 4 H(+)(out). Core subunit of the mitochondrial membrane respiratory chain NADH dehydrogenase (Complex I) that is believed to belong to the minimal assembly required for catalysis. Complex I functions in the transfer of electrons from NADH to the respiratory chain. The immediate electron acceptor for the enzyme is believed to be ubiquinone. In Sarcophyton glaucum (Toadstool umbrella leather coral), this protein is NADH-ubiquinone oxidoreductase chain 6 (ND6).